Here is a 313-residue protein sequence, read N- to C-terminus: Protein FixB (313 aa).

An FAD-binding site is contributed by 255–283 (LYLAVGISGQIQHMVGANASQTIFAINKD).

Belongs to the ETF alpha-subunit/FixB family. In terms of assembly, heterodimer of FixA and FixB.

It functions in the pathway amine and polyamine metabolism; carnitine metabolism. In terms of biological role, required for anaerobic carnitine reduction. May bring reductant to CaiA. The sequence is that of Protein FixB from Escherichia coli O81 (strain ED1a).